A 417-amino-acid chain; its full sequence is NADH-quinone oxidoreductase subunit D (417 aa).

It belongs to the complex I 49 kDa subunit family. NDH-1 is composed of 14 different subunits. Subunits NuoB, C, D, E, F, and G constitute the peripheral sector of the complex.

It localises to the cell inner membrane. The catalysed reaction is a quinone + NADH + 5 H(+)(in) = a quinol + NAD(+) + 4 H(+)(out). NDH-1 shuttles electrons from NADH, via FMN and iron-sulfur (Fe-S) centers, to quinones in the respiratory chain. The immediate electron acceptor for the enzyme in this species is believed to be ubiquinone. Couples the redox reaction to proton translocation (for every two electrons transferred, four hydrogen ions are translocated across the cytoplasmic membrane), and thus conserves the redox energy in a proton gradient. The chain is NADH-quinone oxidoreductase subunit D from Ralstonia pickettii (strain 12J).